The sequence spans 702 residues: Elongation factor G 2 (702 aa).

The 284-residue stretch at 8–291 folds into the tr-type G domain; that stretch reads ELYRNIGIVA…AVIDYLPAPS (284 aa). GTP is bound by residues 17 to 24, 89 to 93, and 143 to 146; these read AHVDAGKT, DTPGH, and NKMD. Residues 293–314 are disordered; it reads IPAIRGTDPDDEEKHDERHADD.

This sequence belongs to the TRAFAC class translation factor GTPase superfamily. Classic translation factor GTPase family. EF-G/EF-2 subfamily.

The protein localises to the cytoplasm. In terms of biological role, catalyzes the GTP-dependent ribosomal translocation step during translation elongation. During this step, the ribosome changes from the pre-translocational (PRE) to the post-translocational (POST) state as the newly formed A-site-bound peptidyl-tRNA and P-site-bound deacylated tRNA move to the P and E sites, respectively. Catalyzes the coordinated movement of the two tRNA molecules, the mRNA and conformational changes in the ribosome. The sequence is that of Elongation factor G 2 (fusB) from Pseudomonas aeruginosa (strain ATCC 15692 / DSM 22644 / CIP 104116 / JCM 14847 / LMG 12228 / 1C / PRS 101 / PAO1).